Consider the following 714-residue polypeptide: DNA ligase (714 aa).

NAD(+)-binding positions include D59–D63, S108–L109, and E139. The N6-AMP-lysine intermediate role is filled by K141. NAD(+) is bound by residues R162, E200, K325, and K349. C443, C446, C461, and C466 together coordinate Zn(2+). In terms of domain architecture, BRCT spans V624–H713.

This sequence belongs to the NAD-dependent DNA ligase family. LigA subfamily. It depends on Mg(2+) as a cofactor. Mn(2+) serves as cofactor.

It carries out the reaction NAD(+) + (deoxyribonucleotide)n-3'-hydroxyl + 5'-phospho-(deoxyribonucleotide)m = (deoxyribonucleotide)n+m + AMP + beta-nicotinamide D-nucleotide.. In terms of biological role, DNA ligase that catalyzes the formation of phosphodiester linkages between 5'-phosphoryl and 3'-hydroxyl groups in double-stranded DNA using NAD as a coenzyme and as the energy source for the reaction. It is essential for DNA replication and repair of damaged DNA. The sequence is that of DNA ligase from Persephonella marina (strain DSM 14350 / EX-H1).